A 103-amino-acid chain; its full sequence is Co-chaperonin GroES (103 aa).

It belongs to the GroES chaperonin family. In terms of assembly, heptamer of 7 subunits arranged in a ring. Interacts with the chaperonin GroEL.

The protein resides in the cytoplasm. In terms of biological role, together with the chaperonin GroEL, plays an essential role in assisting protein folding. The GroEL-GroES system forms a nano-cage that allows encapsulation of the non-native substrate proteins and provides a physical environment optimized to promote and accelerate protein folding. GroES binds to the apical surface of the GroEL ring, thereby capping the opening of the GroEL channel. The polypeptide is Co-chaperonin GroES (Prochlorococcus marinus (strain MIT 9211)).